Reading from the N-terminus, the 149-residue chain is Large ribosomal subunit protein bL9 (149 aa).

This sequence belongs to the bacterial ribosomal protein bL9 family.

Binds to the 23S rRNA. This chain is Large ribosomal subunit protein bL9, found in Anaeromyxobacter dehalogenans (strain 2CP-1 / ATCC BAA-258).